The following is a 185-amino-acid chain: Large ribosomal subunit protein uL5 (185 aa).

This sequence belongs to the universal ribosomal protein uL5 family. As to quaternary structure, part of the 50S ribosomal subunit; part of the 5S rRNA/L5/L18/L25 subcomplex. Contacts the 5S rRNA and the P site tRNA. Forms a bridge to the 30S subunit in the 70S ribosome.

Its function is as follows. This is one of the proteins that bind and probably mediate the attachment of the 5S RNA into the large ribosomal subunit, where it forms part of the central protuberance. In the 70S ribosome it contacts protein S13 of the 30S subunit (bridge B1b), connecting the 2 subunits; this bridge is implicated in subunit movement. Contacts the P site tRNA; the 5S rRNA and some of its associated proteins might help stabilize positioning of ribosome-bound tRNAs. In Rhizobium rhizogenes (strain K84 / ATCC BAA-868) (Agrobacterium radiobacter), this protein is Large ribosomal subunit protein uL5.